A 188-amino-acid polypeptide reads, in one-letter code: Elongation factor P (188 aa).

At K34 the chain carries N6-(3,6-diaminohexanoyl)-5-hydroxylysine.

It belongs to the elongation factor P family. May be beta-lysylated on the epsilon-amino group of Lys-34 by the combined action of EpmA and EpmB, and then hydroxylated on the C5 position of the same residue by EpmC (if this protein is present). Lysylation is critical for the stimulatory effect of EF-P on peptide-bond formation. The lysylation moiety may extend toward the peptidyltransferase center and stabilize the terminal 3-CCA end of the tRNA. Hydroxylation of the C5 position on Lys-34 may allow additional potential stabilizing hydrogen-bond interactions with the P-tRNA.

Its subcellular location is the cytoplasm. It participates in protein biosynthesis; polypeptide chain elongation. Involved in peptide bond synthesis. Alleviates ribosome stalling that occurs when 3 or more consecutive Pro residues or the sequence PPG is present in a protein, possibly by augmenting the peptidyl transferase activity of the ribosome. Modification of Lys-34 is required for alleviation. This Xylella fastidiosa (strain M23) protein is Elongation factor P.